Consider the following 221-residue polypeptide: GTP-binding nuclear protein Ran-A1 (221 aa).

The 165-residue stretch at 10 to 174 (DYPSFKLVIV…LYLARKLAGD (165 aa)) folds into the Small GTPase Ran-type domain. 21-28 (DGGTGKTT) is a GTP binding site. Residues 40-48 (KKYEPTIGV) are switch-I. GTP is bound by residues glycine 71, 125-128 (NKVD), and 153-155 (SAK). The interval 71–87 (GQEKFGGLRDGYYIHGQ) is switch-II. Residues 199 to 208 (QHEAELAAAA) show a composition bias toward low complexity. The interval 199 to 221 (QHEAELAAAASQPLPDDDDETFD) is disordered.

It belongs to the small GTPase superfamily. Ran family. Found in a nuclear export complex with RanGTP, exportin and pre-miRNA.

The protein resides in the nucleus. In terms of biological role, GTP-binding protein involved in nucleocytoplasmic transport. Required for the import of protein into the nucleus and also for RNA export. Involved in chromatin condensation and control of cell cycle. The chain is GTP-binding nuclear protein Ran-A1 (RAN-A1) from Nicotiana tabacum (Common tobacco).